The sequence spans 212 residues: Thymidylate kinase (212 aa).

Residue 13 to 20 coordinates ATP; it reads GLEGAGKS.

The protein belongs to the thymidylate kinase family.

It carries out the reaction dTMP + ATP = dTDP + ADP. Functionally, phosphorylation of dTMP to form dTDP in both de novo and salvage pathways of dTTP synthesis. In Legionella pneumophila (strain Corby), this protein is Thymidylate kinase.